The primary structure comprises 263 residues: Small ribosomal subunit protein eS4, Y isoform 2 (263 aa).

Residues 42-104 (LPLIVFLRNR…TGEHFRLVYN (63 aa)) enclose the S4 RNA-binding domain.

The protein belongs to the eukaryotic ribosomal protein eS4 family.

In Homo sapiens (Human), this protein is Small ribosomal subunit protein eS4, Y isoform 2 (RPS4Y2).